A 292-amino-acid chain; its full sequence is Poly-beta-1,6-N-acetyl-D-glucosamine N-deacetylase (292 aa).

An N-terminal signal peptide occupies residues 1-28; it reads MKYRKFIILVLSILIILPVSTLDGHHIA. The NodB homology domain maps to 114–292; sequence RSVWINFDDM…WDGFHEKDET (179 aa).

This sequence belongs to the polysaccharide deacetylase family.

The protein resides in the secreted. It localises to the cell wall. Catalyzes the N-deacetylation of poly-beta-1,6-N-acetyl-D-glucosamine (PNAG, also referred to as PIA), a biofilm adhesin polysaccharide. N-deacetylation is crucial for attachment of the polysaccharide to the bacterial cell surface; it leads to the introduction of positive charges in the otherwise neutral PIA polymer, allowing electrostatic interactions. The chain is Poly-beta-1,6-N-acetyl-D-glucosamine N-deacetylase (icaB) from Staphylococcus aureus (strain COL).